Reading from the N-terminus, the 379-residue chain is MATQGQVITCKAAVAYEPNKPLVIEDVQVAPPQAGEVRIKILYTALCHTDAYTWSGKDPEGLFPCILGHEAAGIVESVGEGVTEVQAGDHVIPCYQAECRECKFCKSGKTNLCGKVRSATGVGIMMNDRKSRFSVNGKPIYHFMGTSTFSQYTVVHDVSVAKIDPTAPLDKVCLLGCGVPTGLGAVWNTAKVEPGSNVAIFGLGTVGLAVAEGAKTAGASRIIGIDIDSKKYETAKKFGVNEFVNPKDHDKPIQEVIVDLTDGGVDYSFECIGNVSVMRAALECCHKGWGTSVIVGVAASGQEISTRPFQLVTGRVWKGTAFGGFKSRTQVPWLVEKYMNKEIKVDEYITHNLTLGEINKAFDLLHEGTCLRCVLDTSK.

Ala-2 carries the N-acetylalanine modification. Cys-47 is a Zn(2+) binding site. His-48 is a binding site for NAD(+). Thr-49 and His-69 together coordinate an alcohol. Residues His-69, Glu-70, Cys-99, Cys-102, Cys-105, Cys-113, and Cys-177 each coordinate Zn(2+). Residues 202-207 (GLGTVG), Asp-226, Lys-231, Ile-272, 295-297 (VGV), 320-322 (TAF), and Arg-372 contribute to the NAD(+) site.

This sequence belongs to the zinc-containing alcohol dehydrogenase family. Class-III subfamily. As to quaternary structure, homodimer. The cofactor is Zn(2+). In terms of tissue distribution, ubiquitous.

The protein resides in the cytoplasm. The catalysed reaction is a primary alcohol + NAD(+) = an aldehyde + NADH + H(+). The enzyme catalyses a secondary alcohol + NAD(+) = a ketone + NADH + H(+). It catalyses the reaction S-(hydroxymethyl)glutathione + NADP(+) = S-formylglutathione + NADPH + H(+). It carries out the reaction S-(hydroxymethyl)glutathione + NAD(+) = S-formylglutathione + NADH + H(+). The catalysed reaction is S-nitrosoglutathione + NADH + H(+) = S-(hydroxysulfenamide)glutathione + NAD(+). Its activity is regulated as follows. Repressed by thiol-modifying agents N-ethylmaleimide (NEM) and 5,5-dithio-bis-(2-nitrobenzoic acid) (DTNB), as well as by methyl methanethiosulfonate (MMTS) in a dose-dependent manner. Inhibited by hydrogen peroxide H(2)O(2). Functionally, alcohol dehydrogenase catalyzing the reduction of nitrosoglutathione. Can also use long-chain alcohols including cinnamyl alcohol and geraniol, and, to a lower extent, octanol. Plays a central role in formaldehyde detoxification. Not able to use ethanol (EtOH) as substrate. The sequence is that of Alcohol dehydrogenase class-3 from Arabidopsis thaliana (Mouse-ear cress).